We begin with the raw amino-acid sequence, 507 residues long: Histidine ammonia-lyase (507 aa).

A cross-link (5-imidazolinone (Ala-Gly)) is located at residues 141 to 143 (ASG). Serine 142 is modified (2,3-didehydroalanine (Ser)).

Belongs to the PAL/histidase family. Contains an active site 4-methylidene-imidazol-5-one (MIO), which is formed autocatalytically by cyclization and dehydration of residues Ala-Ser-Gly.

Its subcellular location is the cytoplasm. It carries out the reaction L-histidine = trans-urocanate + NH4(+). The protein operates within amino-acid degradation; L-histidine degradation into L-glutamate; N-formimidoyl-L-glutamate from L-histidine: step 1/3. The polypeptide is Histidine ammonia-lyase (Burkholderia pseudomallei (strain 1106a)).